Here is a 360-residue protein sequence, read N- to C-terminus: Protein Wnt-2 (360 aa).

The signal sequence occupies residues 1–25 (MNAPLCGIWLWLPLLLTWLTPEVSS). Disulfide bonds link cysteine 76/cysteine 87, cysteine 127/cysteine 135, cysteine 137/cysteine 157, cysteine 206/cysteine 220, cysteine 208/cysteine 215, cysteine 278/cysteine 309, cysteine 294/cysteine 304, cysteine 308/cysteine 348, cysteine 324/cysteine 339, cysteine 326/cysteine 336, and cysteine 331/cysteine 332. Residue serine 212 is the site of O-palmitoleoyl serine; by PORCN attachment. An N-linked (GlcNAc...) asparagine glycan is attached at asparagine 295.

It belongs to the Wnt family. In terms of processing, palmitoleoylation is required for efficient binding to frizzled receptors. Depalmitoleoylation leads to Wnt signaling pathway inhibition.

The protein localises to the secreted. The protein resides in the extracellular space. Its subcellular location is the extracellular matrix. Functionally, ligand for members of the frizzled family of seven transmembrane receptors. Functions in the canonical Wnt signaling pathway that results in activation of transcription factors of the TCF/LEF family. Functions as a upstream regulator of FGF10 expression. Plays an important role in embryonic lung development. May contribute to embryonic brain development by regulating the proliferation of dopaminergic precursors and neurons. The polypeptide is Protein Wnt-2 (WNT2) (Otolemur garnettii (Small-eared galago)).